An 88-amino-acid polypeptide reads, in one-letter code: uncharacterized protein (88 aa).

A helical transmembrane segment spans residues 34 to 54; that stretch reads IIIAVILIFFLTIVGLFYLII.

It localises to the membrane. This is an uncharacterized protein from Ureaplasma parvum serovar 3 (strain ATCC 700970).